The chain runs to 319 residues: Small ribosomal subunit protein mS35 (319 aa).

The N-terminal 30 residues, 1–30, are a transit peptide targeting the mitochondrion; that stretch reads MKVPLGLWKVSRGNLWSTQKRVLTMSRCLN.

This sequence belongs to the mitochondrion-specific ribosomal protein mS35 family. Component of the mitochondrial small ribosomal subunit (mt-SSU). Mature yeast 74S mitochondrial ribosomes consist of a small (37S) and a large (54S) subunit. The 37S small subunit contains a 15S ribosomal RNA (15S mt-rRNA) and 34 different proteins. The 54S large subunit contains a 21S rRNA (21S mt-rRNA) and 46 different proteins.

It is found in the mitochondrion. Its function is as follows. Component of the mitochondrial ribosome (mitoribosome), a dedicated translation machinery responsible for the synthesis of mitochondrial genome-encoded proteins, including at least some of the essential transmembrane subunits of the mitochondrial respiratory chain. The mitoribosomes are attached to the mitochondrial inner membrane and translation products are cotranslationally integrated into the membrane. This chain is Small ribosomal subunit protein mS35 (RSM24), found in Saccharomyces cerevisiae (strain ATCC 204508 / S288c) (Baker's yeast).